The following is a 399-amino-acid chain: Tryptophan synthase beta chain (399 aa).

An N6-(pyridoxal phosphate)lysine modification is found at K92.

This sequence belongs to the TrpB family. As to quaternary structure, tetramer of two alpha and two beta chains. Pyridoxal 5'-phosphate is required as a cofactor.

It carries out the reaction (1S,2R)-1-C-(indol-3-yl)glycerol 3-phosphate + L-serine = D-glyceraldehyde 3-phosphate + L-tryptophan + H2O. Its pathway is amino-acid biosynthesis; L-tryptophan biosynthesis; L-tryptophan from chorismate: step 5/5. In terms of biological role, the beta subunit is responsible for the synthesis of L-tryptophan from indole and L-serine. In Thiobacillus denitrificans (strain ATCC 25259 / T1), this protein is Tryptophan synthase beta chain.